The primary structure comprises 208 residues: 3-demethoxyubiquinol 3-hydroxylase (208 aa).

Residues Glu-57, Glu-87, His-90, Glu-139, Glu-171, and His-174 each coordinate Fe cation.

It belongs to the COQ7 family. Fe cation serves as cofactor.

The protein resides in the cell membrane. It catalyses the reaction a 5-methoxy-2-methyl-3-(all-trans-polyprenyl)benzene-1,4-diol + AH2 + O2 = a 3-demethylubiquinol + A + H2O. It functions in the pathway cofactor biosynthesis; ubiquinone biosynthesis. Its function is as follows. Catalyzes the hydroxylation of 2-nonaprenyl-3-methyl-6-methoxy-1,4-benzoquinol during ubiquinone biosynthesis. The protein is 3-demethoxyubiquinol 3-hydroxylase of Burkholderia mallei (strain NCTC 10229).